A 325-amino-acid polypeptide reads, in one-letter code: Alpha-cuprenene synthase COP6 (325 aa).

Positions 102, 166, 224, 228, and 232 each coordinate Mg(2+).

This sequence belongs to the trichodiene synthase family. Mg(2+) is required as a cofactor.

Functionally, alpha-cuprenene synthase; part of the gene cluster that mediates the biosynthesis of alpha-cuprenene and oxidized derivatives. The alpha-cuprenene synthase COP6 is the only sesquiterpene synthase identified in C.cinereus that appears to be part of a biosynthetic gene cluster and is highly specific since it catalyzes the cyclization of (2E,6E)-farnesyl diphosphate into only one product, alpha-cuprenene. COP6 is also able to perform the cyclization of geranyl diphosphate. The cytochrome P450 monooxygenase COX2 then oxidizes the cyclohexadiene ring of alpha-cuprenene at positions 1 and 4, yielding first alpha-cuparene, followed by alpha-cuparophenol and a further yet unidentified compound resulting from one additional oxidation step. The cytochrome P450 monooxygenase COX1 then likely catalyzes the oxidation at position 9 of the pentane ring of alpha-cuprenene to give the corresponding hydroxy or ketone derivatives. The sequence is that of Alpha-cuprenene synthase COP6 from Coprinopsis cinerea (strain Okayama-7 / 130 / ATCC MYA-4618 / FGSC 9003) (Inky cap fungus).